We begin with the raw amino-acid sequence, 313 residues long: Ribosomal RNA small subunit methyltransferase H (313 aa).

Residues Gly37–His39, Asp57, Phe82, Asp104, and Gln111 contribute to the S-adenosyl-L-methionine site.

It belongs to the methyltransferase superfamily. RsmH family.

It is found in the cytoplasm. The catalysed reaction is cytidine(1402) in 16S rRNA + S-adenosyl-L-methionine = N(4)-methylcytidine(1402) in 16S rRNA + S-adenosyl-L-homocysteine + H(+). Specifically methylates the N4 position of cytidine in position 1402 (C1402) of 16S rRNA. The polypeptide is Ribosomal RNA small subunit methyltransferase H (Alteromonas mediterranea (strain DSM 17117 / CIP 110805 / LMG 28347 / Deep ecotype)).